The sequence spans 426 residues: Pregnancy-specific beta-1-glycoprotein 9 (426 aa).

An N-terminal signal peptide occupies residues 1 to 34; that stretch reads MGPLPAPSCTQRITWKGLLLTASLLNFWNPPTTA. Residues 35–144 enclose the Ig-like V-type domain; that stretch reads EVTIEAQPPK…IRHFTFTLYL (110 aa). Residues asparagine 104 and asparagine 111 are each glycosylated (N-linked (GlcNAc...) asparagine). Residues 127-129 carry the Cell attachment site motif; that stretch reads RGD. Ig-like C2-type domains are found at residues 147-234, 242-326, and 335-410; these read PKPY…VTLN, PYIT…PVIL, and PRIY…KSMT. 3 cysteine pairs are disulfide-bonded: cysteine 169–cysteine 217, cysteine 262–cysteine 310, and cysteine 354–cysteine 394. N-linked (GlcNAc...) asparagine glycosylation is found at asparagine 199, asparagine 268, asparagine 303, and asparagine 387.

It belongs to the immunoglobulin superfamily. CEA family. Interacts with latency-associated peptide; leading to TGFB1 activation.

It localises to the secreted. Its function is as follows. Binds to the small latent transforming growth factor-beta complex, consisting of the N-terminal TGFB1 latency-associated peptide (LAP) and the mature form of TGFB1, thereby leading to the activation of TGFB1. The activation of TGFB1 leads to stimulation of naive CD4(+) T-cells to increase FoxP3 expression and to an increase in the number of FoxP3(+) regulatory T-cells. Induces the differentiation of a suppressive CD4(+)LAP(+)FoxP3(-) T-cell subset. Induces the secretion of TGFB1 in macrophages, but not in activated CD4(+) T-cells. May reduce the expression of several pro-inflammatory cytokines and chemokines by CD4(+) T-cells, including IL2 and IL6. In Homo sapiens (Human), this protein is Pregnancy-specific beta-1-glycoprotein 9 (PSG9).